The following is a 431-amino-acid chain: Histidinol dehydrogenase (431 aa).

NAD(+) is bound by residues Y127, Q185, and N208. S234, Q256, and H259 together coordinate substrate. Zn(2+)-binding residues include Q256 and H259. Residues E323 and H324 each act as proton acceptor in the active site. The substrate site is built by H324, D357, E411, and H416. D357 is a binding site for Zn(2+). Residue H416 participates in Zn(2+) binding.

This sequence belongs to the histidinol dehydrogenase family. The cofactor is Zn(2+).

The enzyme catalyses L-histidinol + 2 NAD(+) + H2O = L-histidine + 2 NADH + 3 H(+). It functions in the pathway amino-acid biosynthesis; L-histidine biosynthesis; L-histidine from 5-phospho-alpha-D-ribose 1-diphosphate: step 9/9. Its function is as follows. Catalyzes the sequential NAD-dependent oxidations of L-histidinol to L-histidinaldehyde and then to L-histidine. This chain is Histidinol dehydrogenase, found in Vibrio cholerae serotype O1 (strain ATCC 39315 / El Tor Inaba N16961).